We begin with the raw amino-acid sequence, 559 residues long: MAMSLKKIGAIAVGGAMVASALASGVMAATTSGDVAGFMKNAIKEDGTPNVDIVVGSGAAVMDVVSAADVAAKIGSMAYKTGVVEDRSAVVKVSAKAESDDVNIFTLNATNEDIALVAAADSDYAKGFINGSDQLKVTDQLASGSIQDVNDADFNATSLGDVSTMLKVPDIDPSDWYSNDDDAGEVVFTRIVYDSDKLSIDEDQILYASIAYKNDEDVFNDNNTVTLKPGMRIPFLGEEYAVVKIDDEDDIIYLGKEAKDGVLKEGEXFAVGNGYEVKIASILKSGDTSTEYSVNVQILKDGKVVKEKTDTVGGSSSAQLKLAYKDVGVVVNDAWEDIAGTTGYAEVLITKDTKALELGEEYIPDWEAYAALNNSDKLEIKKDITESDKANIIGIALKYVGDKKKKLGDRDEVDIANYLKLVFDDEDKNDVLKVKFLMDESKEVTLDIGQKATVLNAEVRLKDILADAQQSVKLTAPIAKLDSEVSLDTADKNLILVGGPVVNALTKELVDAGKVAIDNTSPATLAVVEGAANGNDVLVVAGGDREATREAAKALLEMI.

Residues 1 to 28 (MAMSLKKIGAIAVGGAMVASALASGVMA) form the signal peptide. 5 N-linked (GlcNAc...) asparagine glycosylation sites follow: Asn-108, Asn-130, Asn-155, Asn-222, and Asn-373.

The protein belongs to the Mj S-layer protein family.

It is found in the secreted. The protein resides in the cell wall. Its subcellular location is the S-layer. S-layer protein. The S-layer is a paracrystalline mono-layered assembly of proteins which coat the surface of the cell. The polypeptide is S-layer protein (Methanothermococcus thermolithotrophicus (Methanococcus thermolithotrophicus)).